The primary structure comprises 113 residues: uncharacterized protein (113 aa).

Disordered regions lie at residues 1 to 22 (MGEHAIKRHMRQRKPTKHPLAQ) and 90 to 113 (DGRHTTESSFEHSSPSRSPQSDDL). Basic and acidic residues predominate over residues 90–99 (DGRHTTESSF). Positions 100–113 (EHSSPSRSPQSDDL) are enriched in low complexity.

This is an uncharacterized protein from Mycobacterium tuberculosis (strain CDC 1551 / Oshkosh).